A 33-amino-acid polypeptide reads, in one-letter code: Cytochrome b6-f complex subunit 8 (33 aa).

The helical transmembrane segment at 2–22 (LFTVAWASLAAMFSFSIAMVV) threads the bilayer.

It belongs to the PetN family. The 4 large subunits of the cytochrome b6-f complex are cytochrome b6, subunit IV (17 kDa polypeptide, PetD), cytochrome f and the Rieske protein, while the 4 small subunits are PetG, PetL, PetM and PetN. The complex functions as a dimer.

It is found in the cellular thylakoid membrane. Its function is as follows. Component of the cytochrome b6-f complex, which mediates electron transfer between photosystem II (PSII) and photosystem I (PSI), cyclic electron flow around PSI, and state transitions. The protein is Cytochrome b6-f complex subunit 8 of Synechococcus sp. (strain CC9902).